Here is a 537-residue protein sequence, read N- to C-terminus: Frizzled-4 (537 aa).

A signal peptide spans 1–36; the sequence is MAWPGTGPSSRGAPGGVGLRLGLLLQFLLLLRPTLG. Residues 37-212 are Extracellular-facing; sequence FGDEEERRCD…KCGYDAGLYS (176 aa). In terms of domain architecture, FZ spans 40–161; that stretch reads EEERRCDPIR…NDHNHMCMEG (122 aa). Cystine bridges form between Cys-45/Cys-106, Cys-53/Cys-99, Cys-90/Cys-128, Cys-117/Cys-158, Cys-121/Cys-145, Cys-181/Cys-200, Cys-204/Cys-282, and Cys-302/Cys-377. Residue Asn-59 is glycosylated (N-linked (GlcNAc...) asparagine). A glycan (N-linked (GlcNAc...) asparagine) is linked at Asn-144. The helical transmembrane segment at 213–243 threads the bilayer; sequence RSAKEFTDIWMAVWASLCFISTTFTVLTFLI. At 244-249 the chain is on the cytoplasmic side; that stretch reads DSSRFS. Residues 250–275 form a helical membrane-spanning segment; that stretch reads YPERPIIFLSMCYNIYSIAYIVRLTV. Topologically, residues 276 to 299 are extracellular; the sequence is GRERISCDFEEAAEPVLIQEGLKN. A helical transmembrane segment spans residues 300-333; the sequence is TGCAIIFLLMYFFGMASSIWWVILTLTWFLAAGL. Residues 334-336 are Cytoplasmic-facing; the sequence is KWG. Residues 337–365 traverse the membrane as a helical segment; it reads HEAIEMHSSYFHIAAWAIPAVKTIVILIM. The Extracellular portion of the chain corresponds to 366–383; it reads RLVDADELTGLCYVGNQN. Residues 384–410 traverse the membrane as a helical segment; the sequence is LDALTGFVVAPLFTYLVIGTLFIAAGL. Topologically, residues 411 to 431 are cytoplasmic; it reads VALFKIRSNLQKDGTKTDKLE. Residues 432–460 form a helical membrane-spanning segment; it reads RLMVKIGVFSVLYTVPATCVIACYFYEIS. At 461-473 the chain is on the extracellular side; the sequence is NWALFRYSADDSN. A helical transmembrane segment spans residues 474-495; sequence MAVEMLKIFMSLLVGITSGMWI. Over 496 to 537 the chain is Cytoplasmic; that stretch reads WSAKTLHTWQKCSNRLVNSGKVKREKRGNGWVKPGKGNETVV. The Lys-Thr-X-X-X-Trp motif, mediates interaction with the PDZ domain of Dvl family members signature appears at 499–504; sequence KTLHTW. The short motif at 535–537 is the PDZ-binding element; the sequence is TVV.

This sequence belongs to the G-protein coupled receptor Fz/Smo family. Interacts with MAGI3 and NDP. Component of a complex, at least composed of TSPAN12, FZD4 and norrin (NDP). Interacts (via FZ domain) with TSKU; TSKU competes with WNT2B for binding to FZD4, inhibiting Wnt signaling and repressing peripheral eye development. Interacts with glypican GPC3. Ubiquitinated by ZNRF3, leading to its degradation by the proteasome. Expressed in chondrocytes.

The protein resides in the cell membrane. Receptor for Wnt proteins. Most frizzled receptors are coupled to the beta-catenin (CTNNB1) canonical signaling pathway, which leads to the activation of disheveled proteins, inhibition of GSK-3 kinase, nuclear accumulation of beta-catenin (CTNNB1) and activation of Wnt target genes. Plays a critical role in retinal vascularization by acting as a receptor for Wnt proteins and norrin (NDP). In retina, it can be activated by Wnt protein-binding and also by Wnt-independent signaling via binding of norrin (NDP), promoting in both cases beta-catenin (CTNNB1) accumulation and stimulation of LEF/TCF-mediated transcriptional programs. A second signaling pathway involving PKC and calcium fluxes has been seen for some family members, but it is not yet clear if it represents a distinct pathway or if it can be integrated in the canonical pathway, as PKC seems to be required for Wnt-mediated inactivation of GSK-3 kinase. Both pathways seem to involve interactions with G-proteins. May be involved in transduction and intercellular transmission of polarity information during tissue morphogenesis and/or in differentiated tissues. Activation by Wnt5A stimulates PKC activity via a G-protein-dependent mechanism. The protein is Frizzled-4 (Fzd4) of Mus musculus (Mouse).